The chain runs to 484 residues: Nuclear rim protein 1 (484 aa).

Serine 3 is modified (phosphoserine). 2 helical membrane-spanning segments follow: residues 145-165 (FTIF…MFGY) and 252-272 (TAIV…AIVF). Positions 416–457 (SSNENLEKGGAFLPNQDQNRPSKSLSPLRKTPLSARQKRFEG) are disordered. At serine 417 the chain carries Phosphoserine. Over residues 430 to 440 (NQDQNRPSKSL) the composition is skewed to polar residues. The residue at position 474 (serine 474) is a Phosphoserine.

The protein belongs to the NUR1 family. Interacts with CSM1.

Its subcellular location is the nucleus membrane. Its function is as follows. Member of a perinuclear network that controls recombination at multiple loci to maintain genome stability. Required for rDNA repeat stability. The protein is Nuclear rim protein 1 (NUR1) of Saccharomyces cerevisiae (strain Lalvin EC1118 / Prise de mousse) (Baker's yeast).